The primary structure comprises 523 residues: Exodeoxyribonuclease 7 large subunit (523 aa).

The segment at 502–523 is disordered; the sequence is PGASPAARTRAGKAKADQGSLF.

It belongs to the XseA family. In terms of assembly, heterooligomer composed of large and small subunits.

The protein localises to the cytoplasm. The enzyme catalyses Exonucleolytic cleavage in either 5'- to 3'- or 3'- to 5'-direction to yield nucleoside 5'-phosphates.. Bidirectionally degrades single-stranded DNA into large acid-insoluble oligonucleotides, which are then degraded further into small acid-soluble oligonucleotides. The sequence is that of Exodeoxyribonuclease 7 large subunit from Rhodospirillum centenum (strain ATCC 51521 / SW).